Reading from the N-terminus, the 676-residue chain is Protein kinase C delta type (676 aa).

Residues 1 to 106 (MAPFLRIAFN…KNNGKAEFWL (106 aa)) enclose the C2 domain. Thr43 and Thr50 each carry phosphothreonine. Residue Tyr64 is modified to Phosphotyrosine. A Phosphoserine modification is found at Ser130. Position 141 is a phosphothreonine (Thr141). Position 155 is a phosphotyrosine (Tyr155). The segment at 158 to 208 (NHEFIATFFGQPTFCSVCKDFVWGLNKQGYKCRQCNAAIHKKCIDKIIGRC) adopts a Phorbol-ester/DAG-type 1 zinc-finger fold. Position 218 is a phosphothreonine (Thr218). The Phorbol-ester/DAG-type 2 zinc finger occupies 230-280 (PHRFKVHNYMSPTFCDHCGSLLWGLVKQGLKCEDCGMNVHHKCREKVANLC). Residues Ser299, Ser302, and Ser304 each carry the phosphoserine; by autocatalysis modification. Ser307 is subject to Phosphoserine. Tyr313 carries the phosphotyrosine modification. Residue Tyr334 is modified to Phosphotyrosine; by SRC. The region spanning 349 to 603 (FIFHKVLGKG…TGNIKIHPFF (255 aa)) is the Protein kinase domain. An ATP-binding site is contributed by 355-363 (LGKGSFGKV). Tyr374 carries the phosphotyrosine modification. Lys378 serves as a coordination point for ATP. A Phosphothreonine modification is found at Thr451. Asp473 acts as the Proton acceptor in catalysis. 2 positions are modified to phosphoserine: Ser503 and Ser506. A Phosphothreonine; by autocatalysis modification is found at Thr507. At Tyr567 the chain carries Phosphotyrosine. Residues 604-675 (KTINWTLLEK…VNPKFEHLLE (72 aa)) enclose the AGC-kinase C-terminal domain. Phosphoserine occurs at positions 645, 654, 658, and 664.

It belongs to the protein kinase superfamily. AGC Ser/Thr protein kinase family. PKC subfamily. Interacts with PDPK1 (via N-terminal region). Interacts with RAD9A. Interacts with CDCP1. Interacts with MUC1. Interacts with VASP. Interacts with CAVIN3. Interacts with PRKD2 (via N-terminus and zing-finger domain 1 and 2) in response to oxidative stress; the interaction is independent of PRKD2 tyrosine phosphorylation. Interacts with PLSC3; interaction is enhanced by UV irradiation. Interacts with PRKCH upstream open reading frame 2; the interaction leads to inhibition of kinase activity. Autophosphorylated and/or phosphorylated at Thr-507, within the activation loop; phosphorylation at Thr-507 is not a prerequisite for enzymatic activity. Autophosphorylated at Ser-299, Ser-302 and Ser-304. Upon TNFSF10/TRAIL treatment, phosphorylated at Tyr-155; phosphorylation is required for its translocation to the endoplasmic reticulum and cleavage by caspase-3. Phosphorylated at Tyr-313, Tyr-334 and Tyr-567; phosphorylation of Tyr-313 and Tyr-567 following thrombin or zymosan stimulation potentiates its kinase activity. Phosphorylated by protein kinase PDPK1; phosphorylation is inhibited by the apoptotic C-terminal cleavage product of PKN2. Phosphorylated at Tyr-313 through a SYK and SRC mechanism downstream of C-type lectin receptors activation, promoting its activation. Post-translationally, proteolytically cleaved into a catalytic subunit and a regulatory subunit by caspase-3 during apoptosis which results in kinase activation.

The protein resides in the cytoplasm. It localises to the perinuclear region. Its subcellular location is the nucleus. It is found in the cell membrane. The protein localises to the mitochondrion. The protein resides in the endomembrane system. The enzyme catalyses L-seryl-[protein] + ATP = O-phospho-L-seryl-[protein] + ADP + H(+). It catalyses the reaction L-threonyl-[protein] + ATP = O-phospho-L-threonyl-[protein] + ADP + H(+). It carries out the reaction L-tyrosyl-[protein] + ATP = O-phospho-L-tyrosyl-[protein] + ADP + H(+). Its activity is regulated as follows. Novel PKCs (PRKCD, PRKCE, PRKCH and PRKCQ) are calcium-insensitive, but activated by diacylglycerol (DAG) and phosphatidylserine. Three specific sites; Thr-507 (activation loop of the kinase domain), Ser-645 (turn motif) and Ser-664 (hydrophobic region), need to be phosphorylated for its full activation. Activated by caspase-3 (CASP3) cleavage during apoptosis. After cleavage, the pseudosubstrate motif in the regulatory subunit is released from the substrate recognition site of the catalytic subunit, which enables PRKCD to become constitutively activated. The catalytic subunit which displays properties of a sphingosine-dependent protein kinase is activated by D-erythro-sphingosine (Sph) or N,N-dimethyl-D-erythrosphingosine (DMS) or N,N,N-trimethyl-D-erythrosphingosine (TMS), but not by ceramide or Sph-1-P and is strongly inhibited by phosphatidylserine. Inhibited by PRKCH upstream open reading frame 2. Functionally, calcium-independent, phospholipid- and diacylglycerol (DAG)-dependent serine/threonine-protein kinase that plays contrasting roles in cell death and cell survival by functioning as a pro-apoptotic protein during DNA damage-induced apoptosis, but acting as an anti-apoptotic protein during cytokine receptor-initiated cell death, is involved in tumor suppression as well as survival of several cancers, is required for oxygen radical production by NADPH oxidase and acts as positive or negative regulator in platelet functional responses. Negatively regulates B cell proliferation and also has an important function in self-antigen induced B cell tolerance induction. Upon DNA damage, activates the promoter of the death-promoting transcription factor BCLAF1/Btf to trigger BCLAF1-mediated p53/TP53 gene transcription and apoptosis. In response to oxidative stress, interact with and activate CHUK/IKKA in the nucleus, causing the phosphorylation of p53/TP53. In the case of ER stress or DNA damage-induced apoptosis, can form a complex with the tyrosine-protein kinase ABL1 which trigger apoptosis independently of p53/TP53. In cytosol can trigger apoptosis by activating MAPK11 or MAPK14, inhibiting AKT1 and decreasing the level of X-linked inhibitor of apoptosis protein (XIAP), whereas in nucleus induces apoptosis via the activation of MAPK8 or MAPK9. Upon ionizing radiation treatment, is required for the activation of the apoptosis regulators BAX and BAK, which trigger the mitochondrial cell death pathway. Can phosphorylate MCL1 and target it for degradation which is sufficient to trigger for BAX activation and apoptosis. Is required for the control of cell cycle progression both at G1/S and G2/M phases. Mediates phorbol 12-myristate 13-acetate (PMA)-induced inhibition of cell cycle progression at G1/S phase by up-regulating the CDK inhibitor CDKN1A/p21 and inhibiting the cyclin CCNA2 promoter activity. In response to UV irradiation can phosphorylate CDK1, which is important for the G2/M DNA damage checkpoint activation. Can protect glioma cells from the apoptosis induced by TNFSF10/TRAIL, probably by inducing increased phosphorylation and subsequent activation of AKT1. Is highly expressed in a number of cancer cells and promotes cell survival and resistance against chemotherapeutic drugs by inducing cyclin D1 (CCND1) and hyperphosphorylation of RB1, and via several pro-survival pathways, including NF-kappa-B, AKT1 and MAPK1/3 (ERK1/2). Involved in antifungal immunity by mediating phosphorylation and activation of CARD9 downstream of C-type lectin receptors activation, promoting interaction between CARD9 and BCL10, followed by activation of NF-kappa-B and MAP kinase p38 pathways. Can also act as tumor suppressor upon mitogenic stimulation with PMA or TPA. In N-formyl-methionyl-leucyl-phenylalanine (fMLP)-treated cells, is required for NCF1 (p47-phox) phosphorylation and activation of NADPH oxidase activity, and regulates TNF-elicited superoxide anion production in neutrophils, by direct phosphorylation and activation of NCF1 or indirectly through MAPK1/3 (ERK1/2) signaling pathways. May also play a role in the regulation of NADPH oxidase activity in eosinophil after stimulation with IL5, leukotriene B4 or PMA. In collagen-induced platelet aggregation, acts a negative regulator of filopodia formation and actin polymerization by interacting with and negatively regulating VASP phosphorylation. Downstream of PAR1, PAR4 and CD36/GP4 receptors, regulates differentially platelet dense granule secretion; acts as a positive regulator in PAR-mediated granule secretion, whereas it negatively regulates CD36/GP4-mediated granule release. Phosphorylates MUC1 in the C-terminal and regulates the interaction between MUC1 and beta-catenin. The catalytic subunit phosphorylates 14-3-3 proteins (YWHAB, YWHAZ and YWHAH) in a sphingosine-dependent fashion. Phosphorylates ELAVL1 in response to angiotensin-2 treatment. Phosphorylates mitochondrial phospholipid scramblase 3 (PLSCR3), resulting in increased cardiolipin expression on the mitochondrial outer membrane which facilitates apoptosis. Phosphorylates SMPD1 which induces SMPD1 secretion. The polypeptide is Protein kinase C delta type (Homo sapiens (Human)).